Reading from the N-terminus, the 308-residue chain is Aspartate carbamoyltransferase catalytic subunit (308 aa).

The carbamoyl phosphate site is built by R58 and T59. Position 86 (K86) interacts with L-aspartate. Carbamoyl phosphate-binding residues include R108, H136, and Q139. Residues R169 and R222 each contribute to the L-aspartate site. Carbamoyl phosphate contacts are provided by G264 and P265.

Belongs to the aspartate/ornithine carbamoyltransferase superfamily. ATCase family. In terms of assembly, heterododecamer (2C3:3R2) of six catalytic PyrB chains organized as two trimers (C3), and six regulatory PyrI chains organized as three dimers (R2).

The enzyme catalyses carbamoyl phosphate + L-aspartate = N-carbamoyl-L-aspartate + phosphate + H(+). The protein operates within pyrimidine metabolism; UMP biosynthesis via de novo pathway; (S)-dihydroorotate from bicarbonate: step 2/3. Its function is as follows. Catalyzes the condensation of carbamoyl phosphate and aspartate to form carbamoyl aspartate and inorganic phosphate, the committed step in the de novo pyrimidine nucleotide biosynthesis pathway. This chain is Aspartate carbamoyltransferase catalytic subunit, found in Campylobacter hominis (strain ATCC BAA-381 / DSM 21671 / CCUG 45161 / LMG 19568 / NCTC 13146 / CH001A).